The sequence spans 100 residues: Urease subunit gamma (100 aa).

The protein belongs to the urease gamma subunit family. Heterotrimer of UreA (gamma), UreB (beta) and UreC (alpha) subunits. Three heterotrimers associate to form the active enzyme.

It localises to the cytoplasm. It catalyses the reaction urea + 2 H2O + H(+) = hydrogencarbonate + 2 NH4(+). The protein operates within nitrogen metabolism; urea degradation; CO(2) and NH(3) from urea (urease route): step 1/1. This chain is Urease subunit gamma, found in Shewanella halifaxensis (strain HAW-EB4).